Here is a 506-residue protein sequence, read N- to C-terminus: Beta-glucosidase 13 (506 aa).

The first 25 residues, 1 to 25 (MAAAGEVVMLGGILLPLLLVVAVSG), serve as a signal peptide directing secretion. Gln-49 serves as a coordination point for a beta-D-glucoside. Asn-118 is a glycosylation site (N-linked (GlcNAc...) asparagine). Residues His-153 and 198 to 199 (NE) each bind a beta-D-glucoside. The Proton donor role is filled by Glu-199. Cys-219 and Cys-226 are oxidised to a cystine. A glycan (N-linked (GlcNAc...) asparagine) is linked at Asn-225. Tyr-342 contributes to the a beta-D-glucoside binding site. Residues Asn-357 and Asn-367 are each glycosylated (N-linked (GlcNAc...) asparagine). Residue Glu-413 coordinates a beta-D-glucoside. The active-site Nucleophile is Glu-413. Asn-421 carries an N-linked (GlcNAc...) asparagine glycan. Residues Trp-462, 469 to 470 (EW), and Phe-478 each bind a beta-D-glucoside.

It belongs to the glycosyl hydrolase 1 family.

It carries out the reaction Hydrolysis of terminal, non-reducing beta-D-glucosyl residues with release of beta-D-glucose.. The sequence is that of Beta-glucosidase 13 (BGLU13) from Oryza sativa subsp. japonica (Rice).